Reading from the N-terminus, the 361-residue chain is Protein SGT1 homolog (361 aa).

TPR repeat units follow at residues 3 to 36, 37 to 70, and 71 to 104; these read ASDL…GPAT, ADLY…DPTM, and HKAY…APGD. At Thr-150 the chain carries Phosphothreonine. Residues 159-248 form the CS domain; sequence KPKYRHDYYN…AEQVTWTTLD (90 aa). The tract at residues 255–295 is disordered; that stretch reads AIPQKISTPAETAPRPSYPSSKSKKDWDKLEAEVKKEEKEE. Thr-262 carries the phosphothreonine modification. The SGS domain occupies 271-361; sequence SYPSSKSKKD…DGMELKKWEI (91 aa). Basic and acidic residues predominate over residues 277 to 295; that stretch reads SKKDWDKLEAEVKKEEKEE.

This sequence belongs to the SGT1 family. Constitutively phosphorylated at Thr-262 and phosphorylated at Thr-150 upon infection with the fungal pathogen Ustilago maydis.

It localises to the cytoplasm. The protein localises to the nucleus. May act as positive regulator of basal defense. May be involved in basal disease resistance to the fungal pathogen Ustilago maydis. The polypeptide is Protein SGT1 homolog (Zea mays (Maize)).